We begin with the raw amino-acid sequence, 393 residues long: Meiotic driver wtf19 (393 aa).

A disordered region spans residues 1-98 (MKNKYYPLRS…SSGTADNSST (98 aa)). A compositionally biased stretch (basic and acidic residues) spans 11 to 29 (SMDELSAKNDNEIDLEKGP). 2 stretches are compositionally biased toward polar residues: residues 57 to 72 (GANNPNLFNTDESTTP) and 89 to 98 (SSGTADNSST). A run of 8 helical transmembrane segments spans residues 104–124 (AFLSFISIFVLNVPAVCYLTY), 137–157 (WVYFAVWCASCLMIFISLWYF), 167–187 (VTVIFLAQCIKVTVVFLAQCV), 208–228 (CVKVTAVFLAQCVKVISIGLF), 233–253 (EMMIIIWLLWLIICCILFGCV), 269–289 (CTISAVLLLIVSSVCIPFWTF), 296–316 (LAKVFLLQSGIVLVLNGTMFL), and 332–352 (VLFIMGNVLFLCEMECPGALI).

Belongs to the WTF family. Homomer. Forms protein aggregates. The two isoforms can interact with each other and with themselves. High sequence similarity is required for their interaction.

Its subcellular location is the spore membrane. It is found in the vacuole membrane. It localises to the ascus epiplasm. The protein resides in the cytoplasm. The protein localises to the endoplasmic reticulum membrane. Its function is as follows. Promotes unequal transmission of alleles from the parental zygote to progeny spores by acting as poison/antidote system where the poison and antidote proteins are produced from the same locus; the poison component is trans-acting and targets all spores within an ascus whereas the antidote component is spore-specific, leading to poisoning of all progeny that do not inherit the allele. In terms of biological role, localizes isoform 2 to the vacuole thereby facilitating its degradation. Functionally, forms toxic aggregates that disrupt spore maturation. The chain is Meiotic driver wtf19 from Schizosaccharomyces pombe (strain 972 / ATCC 24843) (Fission yeast).